Here is a 136-residue protein sequence, read N- to C-terminus: Large-conductance mechanosensitive channel (136 aa).

2 helical membrane-spanning segments follow: residues 9-29 and 79-99; these read AFAS…GAAF and IQTV…LKAI.

This sequence belongs to the MscL family. As to quaternary structure, homopentamer.

The protein localises to the cell inner membrane. Its function is as follows. Channel that opens in response to stretch forces in the membrane lipid bilayer. May participate in the regulation of osmotic pressure changes within the cell. The chain is Large-conductance mechanosensitive channel from Shewanella sp. (strain MR-4).